Here is a 637-residue protein sequence, read N- to C-terminus: Rab11 family-interacting protein 4 (637 aa).

The EF-hand domain occupies Gly49–Cys84. Residues Asp62, Asn64, Arg68, and Asp73 each contribute to the Ca(2+) site. Residues Lys82–His637 are necessary for interaction with RAB11A, subcellular location, homo- or heterooligomerization. Disordered regions lie at residues Glu138–Lys175 and Tyr219–Gln256. A coiled-coil region spans residues Lys280–Tyr617. Positions Glu574–Lys636 constitute an FIP-RBD domain.

As to quaternary structure, homodimer. Forms a complex with Rab11 (RAB11A or RAB11B) and ARF6. Interacts with RAB11A; the interaction is direct. Forms a heterooligomeric complex with RAB11FIP2, RAB11FIP3 and RAB11FIP5. Interacts with ECPAS. (Microbial infection) Interacts with human cytomegalovirus/HHV-5 protein gM/UL100. In terms of tissue distribution, present at high level in testis (at protein level). Weakly expressed in other tissues.

The protein resides in the endosome. It localises to the cytoplasm. Its subcellular location is the cytoskeleton. The protein localises to the spindle. It is found in the microtubule organizing center. The protein resides in the centrosome. It localises to the recycling endosome membrane. Its subcellular location is the cleavage furrow. The protein localises to the midbody. It is found in the cytoplasmic vesicle. Acts as a regulator of endocytic traffic by participating in membrane delivery. Required for the abscission step in cytokinesis, possibly by acting as an 'address tag' delivering recycling endosome membranes to the cleavage furrow during late cytokinesis. In case of infection by HCMV (human cytomegalovirus), may participate in egress of the virus out of nucleus; this function is independent of ARF6. This is Rab11 family-interacting protein 4 (RAB11FIP4) from Homo sapiens (Human).